We begin with the raw amino-acid sequence, 606 residues long: Ribonucleoprotein PTB-binding 1 (606 aa).

The segment at 1 to 41 (MAADVSVTHRPPLSPKSGAEVEAGDAAERRAPEEELPPLDP) is disordered. Alanine 2 bears the N-acetylalanine mark. 2 positions are modified to phosphoserine: serine 6 and serine 14. A Nuclear localization signal motif is present at residues 45–60 (RKRLEHTERQFRNRRK). 3 RRM domains span residues 59 to 130 (RKIL…LQPT), 132 to 210 (ALLC…WTDA), and 221 to 299 (RCLC…FCAP). Positions 307–395 (LAALIAAQAT…QTQGQKKPGI (89 aa)) are interaction with PTBP1. Residues 391-474 (KKPGILGDSP…PPAPVGLRGS (84 aa)) form a disordered region. Positions 453-462 (LGLGPPAAQL) are enriched in low complexity. Threonine 463 bears the Phosphothreonine mark. Phosphoserine is present on serine 474. The residue at position 488 (proline 488) is a Phosphothreonine. Residues 519–564 (GLLGLSPGPNGHSHLLKVRAGGGDMQGWEAPAPQRPLTRPALPSVS) are disordered. Phosphoserine occurs at positions 562 and 567. Residues 579-606 (CPRPSPAQKAAMWASTPRASAATTRTPT) form a disordered region. Positions 592-606 (ASTPRASAATTRTPT) are enriched in low complexity.

As to quaternary structure, interacts with PTBP1, RAVER2, VCL and ACTN1. Part of a complex containing RAVER1, VCL and ACTN1.

The protein resides in the nucleus. It localises to the cytoplasm. Cooperates with PTBP1 to modulate regulated alternative splicing events. Promotes exon skipping. Cooperates with PTBP1 to modulate switching between mutually exclusive exons during maturation of the TPM1 pre-mRNA. The chain is Ribonucleoprotein PTB-binding 1 (RAVER1) from Homo sapiens (Human).